Reading from the N-terminus, the 64-residue chain is Disintegrin VLO5A (64 aa).

One can recognise a Disintegrin domain in the interval asparagine 1–aspartate 64. Intrachain disulfides connect cysteine 6/cysteine 29, cysteine 20/cysteine 26, cysteine 25/cysteine 50, and cysteine 38/cysteine 57. The Cell attachment site; atypical (VGD) motif lies at valine 42 to aspartate 44.

This sequence belongs to the venom metalloproteinase (M12B) family. P-II subfamily. P-IIe sub-subfamily. Heterodimer with VLO5B; disulfide-linked. Expressed by the venom gland.

The protein localises to the secreted. In terms of biological role, poor inhibitor of platelet aggregation. The disintegrin inhibits the adhesion of the alpha-4/beta-1 (ITGA4/ITGB1) integrin to VCAM-1. Inhibition on alpha-IIb/beta-3 (ITGA2B/ITGB3) is low. The protein is Disintegrin VLO5A of Macrovipera lebetina obtusa (Levant blunt-nosed viper).